The chain runs to 118 residues: Large ribosomal subunit protein uL18 (118 aa).

The protein belongs to the universal ribosomal protein uL18 family. In terms of assembly, part of the 50S ribosomal subunit; part of the 5S rRNA/L5/L18/L25 subcomplex. Contacts the 5S and 23S rRNAs.

In terms of biological role, this is one of the proteins that bind and probably mediate the attachment of the 5S RNA into the large ribosomal subunit, where it forms part of the central protuberance. The polypeptide is Large ribosomal subunit protein uL18 (Ralstonia pickettii (strain 12J)).